The chain runs to 389 residues: Aspartyl protease UND (389 aa).

A signal peptide spans 1–19 (MKTTMNFVFLFFLPLLINA). The Peptidase A1 domain occupies 58 to 383 (FMAEIHFGSP…DLSAKTAYIN (326 aa)). Asp-76 is an active-site residue. Cys-86 and Cys-92 are disulfide-bonded. A glycan (N-linked (GlcNAc...) asparagine) is linked at Asn-238. Asp-268 is a catalytic residue. The cysteines at positions 304 and 346 are disulfide-linked.

This sequence belongs to the peptidase A1 family.

Probable aspartic protease activated by the transcription factor MYB80. May participate in the regulation of the timing of tapetal programmed cell death (PCD) which is critical for pollen development. This chain is Aspartyl protease UND, found in Arabidopsis thaliana (Mouse-ear cress).